The following is a 592-amino-acid chain: Signal peptide peptidase-like 2B (592 aa).

A signal peptide spans 1–25 (MAAAVAAALARLLAAFLLLAAQVAC). The Lumenal segment spans residues 26–174 (EYGMVHVVSQ…APKEPVLDYN (149 aa)). The PA domain maps to 71 to 149 (TASLLCSAAD…VALLSYKDML (79 aa)). N-linked (GlcNAc...) asparagine glycans are attached at residues Asn-97 and Asn-129. The helical transmembrane segment at 175 to 195 (MVIIFIMAVGTVAIGGYWAGS) threads the bilayer. Residues 196–221 (RDVKKRYMKHKRDDGPEKQEDEAVDV) lie on the Cytoplasmic side of the membrane. A helical transmembrane segment spans residues 222-244 (TPVMTCVFVVMCCSMLVLLYYFY). Residues 245 to 248 (DLLV) lie on the Lumenal side of the membrane. The helical transmembrane segment at 249-271 (YVVIGIFCLASATGLYSCLAPCV) threads the bilayer. At 272–293 (RRLPFGKCRIPNNSLPYFHKRP) the chain is on the cytoplasmic side. A helical membrane pass occupies residues 294-314 (QARMLLLALFCVAVSVVWGVF). Residues 315–319 (RNEDQ) are Lumenal-facing. The helical transmembrane segment at 320-340 (WAWVLQDALGIAFCLYMLKTI) threads the bilayer. The Cytoplasmic portion of the chain corresponds to 341–348 (RLPTFKAC). The helical transmembrane segment at 349 to 369 (TLLLLVLFLYDIFFVFITPFL) threads the bilayer. The active site involves Asp-359. Topologically, residues 370–412 (TKSGSSIMVEVATGPSDSATREKLPMVLKVPRLNSSPLALCDR) are lumenal. The chain crosses the membrane as a helical span at residues 413-433 (PFSLLGFGDILVPGLLVAYCH). The active site involves Asp-421. Topologically, residues 434-445 (RFDIQVQSSRVY) are cytoplasmic. A helical membrane pass occupies residues 446–466 (FVACTIAYGVGLLVTFVALAL). Residues 467 to 470 (MQRG) lie on the Lumenal side of the membrane. Residues 471-491 (QPALLYLVPCTLVTSCAVALW) traverse the membrane as a helical segment. The short motif at 472-474 (PAL) is the PAL element. Residues 492-592 (RRELGVFWTG…SPVTQPGASA (101 aa)) are Cytoplasmic-facing. Residues 512 to 524 (PWAPAPADGPQPP) show a composition bias toward pro residues. Residues 512–592 (PWAPAPADGP…SPVTQPGASA (81 aa)) are disordered. Polar residues predominate over residues 580-592 (AQPSPVTQPGASA).

It belongs to the peptidase A22B family. As to quaternary structure, monomer. Homodimer. Interacts with ITM2B. Interacts with TNF. Interacts with the simian foamy virus envelope glycoprotein gp130 and its processed leader peptide gp18LP; preferentially interacts with the leader peptide gp18LP. Post-translationally, glycosylated. In terms of tissue distribution, expressed predominantly in adrenal cortex and mammary gland.

It localises to the cell membrane. It is found in the golgi apparatus membrane. The protein localises to the lysosome membrane. Its subcellular location is the endosome membrane. The protein resides in the membrane. Intramembrane-cleaving aspartic protease (I-CLiP) that cleaves type II membrane signal peptides in the hydrophobic plane of the membrane. Functions in ITM2B and TNF processing. Catalyzes the intramembrane cleavage of the anchored fragment of shed TNF-alpha (TNF), which promotes the release of the intracellular domain (ICD) for signaling to the nucleus. May play a role in the regulation of innate and adaptive immunity. Catalyzes the intramembrane cleavage of the simian foamy virus processed leader peptide gp18 of the envelope glycoprotein gp130 dependently of prior ectodomain shedding by furin or furin-like proprotein convertase (PC)-mediated cleavage proteolysis. The chain is Signal peptide peptidase-like 2B from Homo sapiens (Human).